The primary structure comprises 350 residues: MHILRGGRRLISFSCNDYLNLTHHPAVKSAAIAAINLYGAGSGASRLVTGNHPLLVELEERLARIKGTQAACVFGSGYLANTGIVPTLTGAKDLILIDELAHACLFAGTQLSPAKTMVFRHNDVAHAEAILAASRAQYRHALLLTDGVFSMDGDRAPLATLSALCAAHDAWLMSDDAHGLGVIGGGRGSVAAAGDPPVPLQMGTLSKAIGGYGGYLCASAAVIDLMKTRARTVIYSTGLPPASAGAALAALEIIENEPELTAKPLAKARAFCAALGLPEAQSPIVPVIVGAPEAALDASRQLADTGFLVTAIRPPTVPAGTARLRFAFTAGHADEDVARVAQAVRDIVKL.

Residue 77-78 coordinates pyridoxal 5'-phosphate; that stretch reads GY. Histidine 102 is a binding site for substrate. Pyridoxal 5'-phosphate-binding positions include serine 150, 175-178, and 204-207; these read DDAH and TLSK. The residue at position 207 (lysine 207) is an N6-(pyridoxal phosphate)lysine. Position 316 (threonine 316) interacts with substrate.

Belongs to the class-II pyridoxal-phosphate-dependent aminotransferase family. BioF subfamily. Homodimer. The cofactor is pyridoxal 5'-phosphate.

It carries out the reaction 6-carboxyhexanoyl-[ACP] + L-alanine + H(+) = (8S)-8-amino-7-oxononanoate + holo-[ACP] + CO2. It participates in cofactor biosynthesis; biotin biosynthesis. Functionally, catalyzes the decarboxylative condensation of pimeloyl-[acyl-carrier protein] and L-alanine to produce 8-amino-7-oxononanoate (AON), [acyl-carrier protein], and carbon dioxide. In Methylocella silvestris (strain DSM 15510 / CIP 108128 / LMG 27833 / NCIMB 13906 / BL2), this protein is 8-amino-7-oxononanoate synthase.